We begin with the raw amino-acid sequence, 499 residues long: Trichothecene C-4 hydroxylase (499 aa).

Residues 7 to 29 form a helical membrane-spanning segment; it reads VGVAVQLVLTVLLASIPLRVIWN. N-linked (GlcNAc...) asparagine glycosylation is found at asparagine 173 and asparagine 287. Residue cysteine 442 coordinates heme. An N-linked (GlcNAc...) asparagine glycan is attached at asparagine 473.

The protein belongs to the cytochrome P450 family. The cofactor is heme.

The protein localises to the membrane. It functions in the pathway sesquiterpene biosynthesis; trichothecene biosynthesis. Its function is as follows. Trichothecene C-4 hydroxylase; part of the gene cluster that mediates the production of the antimicrobial trichothecene harzianum A (HA) that plays a role in Botrytis cinerea antagonistic activity and plant defense priming. The biosynthesis of harzianum A begins with the cyclization of farnesyl diphosphate to trichodiene and is catalyzed by the trichodiene synthase TRI5. Trichodiene undergoes a series of oxygenations catalyzed by the cytochrome P450 monooxygenase TRI4. TRI4 controls the addition of 3 oxygens at C-2, C-11, and the C-12, C-13-epoxide to form the intermediate isotrichodiol. Isotrichodiol then undergoes a non-enzymatic isomerization and cyclization to form 12,13-epoxytrichothec-9-ene (EPT) which is further converted to trichodermol by the cytochrome P450 monooxygenase TRI11 via C-4 hydroxylation. The last step of HA synthesis is esterification of an octatriendioyl moiety to the C-4 oxygen of trichodermol. The octatriendioyl moiety is probably produced by the polyketide synthase TRI17 and the esterification performed by the trichothecene O-acetyltransferase TRI3. This chain is Trichothecene C-4 hydroxylase, found in Trichoderma arundinaceum.